The chain runs to 509 residues: 2-succinyl-5-enolpyruvyl-6-hydroxy-3-cyclohexene-1-carboxylate synthase (509 aa).

This sequence belongs to the TPP enzyme family. MenD subfamily. Homodimer. The cofactor is Mg(2+). It depends on Mn(2+) as a cofactor. Thiamine diphosphate serves as cofactor.

The catalysed reaction is isochorismate + 2-oxoglutarate + H(+) = 5-enolpyruvoyl-6-hydroxy-2-succinyl-cyclohex-3-ene-1-carboxylate + CO2. It participates in quinol/quinone metabolism; 1,4-dihydroxy-2-naphthoate biosynthesis; 1,4-dihydroxy-2-naphthoate from chorismate: step 2/7. Its pathway is quinol/quinone metabolism; menaquinone biosynthesis. Catalyzes the thiamine diphosphate-dependent decarboxylation of 2-oxoglutarate and the subsequent addition of the resulting succinic semialdehyde-thiamine pyrophosphate anion to isochorismate to yield 2-succinyl-5-enolpyruvyl-6-hydroxy-3-cyclohexene-1-carboxylate (SEPHCHC). The sequence is that of 2-succinyl-5-enolpyruvyl-6-hydroxy-3-cyclohexene-1-carboxylate synthase from Corynebacterium diphtheriae (strain ATCC 700971 / NCTC 13129 / Biotype gravis).